A 544-amino-acid polypeptide reads, in one-letter code: Membrane protein insertase YidC (544 aa).

Residues 6-26 (NILLIGLLFVSFLLWQQWQAD) form a helical membrane-spanning segment. The interval 34–58 (AAQTQSSIPASTVADSHSSDVPDAD) is disordered. Positions 39–49 (SSIPASTVADS) are enriched in polar residues. 4 helical membrane-spanning segments follow: residues 345-365 (LLMFFHSIVGNWGFAIILITL), 423-443 (GGCLPILLQMPIFIALYWVLL), 460-480 (LSVQDPYYVLPILMGISMFVM), and 503-523 (VIFTVFFLWFPAGLVLYWLVG).

It belongs to the OXA1/ALB3/YidC family. Type 1 subfamily. Interacts with the Sec translocase complex via SecD. Specifically interacts with transmembrane segments of nascent integral membrane proteins during membrane integration.

It localises to the cell inner membrane. In terms of biological role, required for the insertion and/or proper folding and/or complex formation of integral membrane proteins into the membrane. Involved in integration of membrane proteins that insert both dependently and independently of the Sec translocase complex, as well as at least some lipoproteins. Aids folding of multispanning membrane proteins. In Shewanella halifaxensis (strain HAW-EB4), this protein is Membrane protein insertase YidC.